A 251-amino-acid chain; its full sequence is Pyrroloquinoline-quinone synthase (251 aa).

The protein belongs to the PqqC family.

It catalyses the reaction 6-(2-amino-2-carboxyethyl)-7,8-dioxo-1,2,3,4,7,8-hexahydroquinoline-2,4-dicarboxylate + 3 O2 = pyrroloquinoline quinone + 2 H2O2 + 2 H2O + H(+). It participates in cofactor biosynthesis; pyrroloquinoline quinone biosynthesis. Its function is as follows. Ring cyclization and eight-electron oxidation of 3a-(2-amino-2-carboxyethyl)-4,5-dioxo-4,5,6,7,8,9-hexahydroquinoline-7,9-dicarboxylic-acid to PQQ. The chain is Pyrroloquinoline-quinone synthase from Pseudomonas putida (strain ATCC 47054 / DSM 6125 / CFBP 8728 / NCIMB 11950 / KT2440).